We begin with the raw amino-acid sequence, 510 residues long: Membrane-bound transcription factor site-2 protease (510 aa).

Residues 1 to 3 (MIP) lie on the Cytoplasmic side of the membrane. Residues 4–24 (VSLVVVVVGGWTAVYLADLVL) form a helical membrane-spanning segment. Over 25–74 (KSSVYFKHSYEDWLEKNGLSISPFHIRWQTSVFNRAFYSWGRRKARMLYQ) the chain is Lumenal. Helical transmembrane passes span 75–95 (WFNF…FLLG) and 96–107 (KTLMQTLAQMMA). Over 108 to 135 (DSPSSSSSSSSSSSSSSSSSIHNEQVLQ) the chain is Lumenal. Residues 136–160 (VVVPGINLPVNQLTYFFAAVLISGV) traverse the membrane as a helical segment. Histidine 162 serves as a coordination point for Zn(2+). The active site involves glutamate 163. 3 helical membrane-spanning segments follow: residues 165-177 (GHGI…QVRF), 178-200 (NGFG…TTHL), and 220-242 (FVLA…PFYY). Histidine 166 contacts Zn(2+). Topologically, residues 243–437 (TGVGVLITEV…LPVIVETFVK (195 aa)) are lumenal. The N-linked (GlcNAc...) asparagine glycan is linked to asparagine 328. A run of 2 helical transmembrane segments spans residues 438–455 (YLIS…VPCF) and 456–467 (ALDGQWILNSFL). Residues 468–483 (DATLTSVIGDNDVKDL) are Lumenal-facing. A helical membrane pass occupies residues 484–504 (IGFFILLGGSVLLAANVTLGL). At 505 to 510 (WMVTAR) the chain is on the cytoplasmic side.

The protein belongs to the peptidase M50A family. The cofactor is Zn(2+).

The protein localises to the membrane. It is found in the cytoplasm. Its subcellular location is the golgi apparatus membrane. It carries out the reaction Cleaves several transcription factors that are type-2 transmembrane proteins within membrane-spanning domains. Known substrates include sterol regulatory element-binding protein (SREBP) -1, SREBP-2 and forms of the transcriptional activator ATF6. SREBP-2 is cleaved at the site 477-DRSRILL-|-CVLTFLCLSFNPLTSLLQWGGA-505. The residues Asn-Pro, 11 residues distal to the site of cleavage in the membrane-spanning domain, are important for cleavage by S2P endopeptidase. Replacement of either of these residues does not prevent cleavage, but there is no cleavage if both of these residues are replaced.. Zinc metalloprotease that mediates intramembrane proteolysis of proteins such as ATF6, ATF6B, SREBF1/SREBP1 and SREBF2/SREBP2. Catalyzes the second step in the proteolytic activation of the sterol regulatory element-binding proteins (SREBPs) SREBF1/SREBP1 and SREBF2/SREBP2: cleaves SREBPs within the first transmembrane segment, thereby releasing the N-terminal segment with a portion of the transmembrane segment attached. Mature N-terminal SREBP fragments shuttle to the nucleus and activate gene transcription. Also mediates the second step in the proteolytic activation of the cyclic AMP-dependent transcription factor ATF-6 (ATF6 and ATF6B). Involved in intramembrane proteolysis during bone formation. In astrocytes and osteoblasts, upon DNA damage and ER stress, mediates the second step of the regulated intramembrane proteolytic activation of the transcription factor CREB3L1, leading to the inhibition of cell-cycle progression. This is Membrane-bound transcription factor site-2 protease (MBTPS2) from Cricetulus griseus (Chinese hamster).